A 446-amino-acid polypeptide reads, in one-letter code: Pre-rRNA-processing protein crb3/ipi3 (446 aa).

WD repeat units follow at residues 74–113, 116–155, 172–214, 216–257, and 294–333; these read ILPE…LIYF, AHYQ…DQNS, GHKR…LLTT, ALPS…SNNV, and SCQS…VLRR.

The protein belongs to the WD repeat IPI3/WDR18 family. As to quaternary structure, component of the RIX1 complex, composed of ipi1, rix1/ipi2 and crb3/ipi3 in a 1:2:2 stoichiometry. The complex interacts (via rix1) with mdn1 (via its hexameric AAA ATPase ring) and the pre-60S ribosome particles. Interacts with rix1, gcr3 and Las1.

The protein resides in the nucleus. The protein localises to the chromosome. Required for both pre-rRNA processing and heterochromatic gene silencing. Functionally, component of the RIX1 complex required for processing of ITS2 sequences from 35S pre-rRNA. This is Pre-rRNA-processing protein crb3/ipi3 (crb3) from Schizosaccharomyces pombe (strain 972 / ATCC 24843) (Fission yeast).